The chain runs to 76 residues: Omega-conotoxin-like Ai6.3 (76 aa).

The N-terminal stretch at 1 to 22 (MKLTCLMIVAVLFLTAWTFVTA) is a signal peptide. Positions 23 to 50 (VPDSSNALENLYLKAHHEMNNPEDSELN) are excised as a propeptide. 3 disulfides stabilise this stretch: Cys-53-Cys-67, Cys-60-Cys-71, and Cys-66-Cys-75.

The protein belongs to the conotoxin O1 superfamily. Expressed by the venom duct.

The protein localises to the secreted. Functionally, omega-conotoxins act at presynaptic membranes, they bind and block voltage-gated calcium channels (Cav). In Conus ammiralis (Admiral cone), this protein is Omega-conotoxin-like Ai6.3.